The chain runs to 177 residues: Bifunctional protein PyrR (177 aa).

Positions Ile101–Thr113 match the PRPP-binding motif.

Belongs to the purine/pyrimidine phosphoribosyltransferase family. PyrR subfamily.

The enzyme catalyses UMP + diphosphate = 5-phospho-alpha-D-ribose 1-diphosphate + uracil. Functionally, regulates the transcription of the pyrimidine nucleotide (pyr) operon in response to exogenous pyrimidines. In terms of biological role, also displays a weak uracil phosphoribosyltransferase activity which is not physiologically significant. The protein is Bifunctional protein PyrR of Endomicrobium trichonymphae.